Here is an 89-residue protein sequence, read N- to C-terminus: MKKGIHPENYREVLFYDASAQMGWVIRSCVATNKSMMWEDGKEYPFYPLDTSSASHPVYTGKRREANTEGRASKFNERFKGMASLAAKK.

The protein belongs to the bacterial ribosomal protein bL31 family. Type B subfamily. As to quaternary structure, part of the 50S ribosomal subunit.

This is Large ribosomal subunit protein bL31B from Haemophilus ducreyi (strain 35000HP / ATCC 700724).